The primary structure comprises 183 residues: NAD(P)H-quinone oxidoreductase subunit I, chloroplastic (183 aa).

4Fe-4S ferredoxin-type domains are found at residues 55–84 and 95–124; these read GRIHFEFDKCIACEVCVRVCPINLPVVDWK and KSYSIDFGVCIFCGNCVEYCPTNCLSMTEE. [4Fe-4S] cluster-binding residues include cysteine 64, cysteine 67, cysteine 70, cysteine 74, cysteine 104, cysteine 107, cysteine 110, and cysteine 114.

Belongs to the complex I 23 kDa subunit family. NDH is composed of at least 16 different subunits, 5 of which are encoded in the nucleus. [4Fe-4S] cluster is required as a cofactor.

The protein resides in the plastid. The protein localises to the chloroplast thylakoid membrane. It carries out the reaction a plastoquinone + NADH + (n+1) H(+)(in) = a plastoquinol + NAD(+) + n H(+)(out). The catalysed reaction is a plastoquinone + NADPH + (n+1) H(+)(in) = a plastoquinol + NADP(+) + n H(+)(out). NDH shuttles electrons from NAD(P)H:plastoquinone, via FMN and iron-sulfur (Fe-S) centers, to quinones in the photosynthetic chain and possibly in a chloroplast respiratory chain. The immediate electron acceptor for the enzyme in this species is believed to be plastoquinone. Couples the redox reaction to proton translocation, and thus conserves the redox energy in a proton gradient. The polypeptide is NAD(P)H-quinone oxidoreductase subunit I, chloroplastic (Anthoceros angustus (Hornwort)).